A 153-amino-acid chain; its full sequence is MERATFAAGCFWGVEAAFSKVEGVISTKVGYTGGTLKDPTYKDVSTGSTGHAESIDIIFDESVITYGELLEVLWNTHDPTTKDSQGPDHGSQYRSAIFYHDDAQREAALRSREQLERSGKYDSTIKTEIVKASEFSPAEDYHQKYFQKLQFKR.

Cysteine 10 is an active-site residue.

It belongs to the MsrA Met sulfoxide reductase family.

The catalysed reaction is L-methionyl-[protein] + [thioredoxin]-disulfide + H2O = L-methionyl-(S)-S-oxide-[protein] + [thioredoxin]-dithiol. It carries out the reaction [thioredoxin]-disulfide + L-methionine + H2O = L-methionine (S)-S-oxide + [thioredoxin]-dithiol. Functionally, has an important function as a repair enzyme for proteins that have been inactivated by oxidation. Catalyzes the reversible oxidation-reduction of methionine sulfoxide in proteins to methionine. The sequence is that of Peptide methionine sulfoxide reductase MsrA from Methanococcoides burtonii (strain DSM 6242 / NBRC 107633 / OCM 468 / ACE-M).